Consider the following 96-residue polypeptide: Co-chaperonin GroES (96 aa).

Belongs to the GroES chaperonin family. In terms of assembly, heptamer of 7 subunits arranged in a ring. Interacts with the chaperonin GroEL.

The protein resides in the cytoplasm. In terms of biological role, together with the chaperonin GroEL, plays an essential role in assisting protein folding. The GroEL-GroES system forms a nano-cage that allows encapsulation of the non-native substrate proteins and provides a physical environment optimized to promote and accelerate protein folding. GroES binds to the apical surface of the GroEL ring, thereby capping the opening of the GroEL channel. The protein is Co-chaperonin GroES of Shewanella baltica (strain OS223).